A 286-amino-acid polypeptide reads, in one-letter code: Polyamine aminopropyltransferase 1 (286 aa).

Residues 1–235 form the PABS domain; sequence MSDYQETLYQ…GAMTFAWGST (235 aa). S-methyl-5'-thioadenosine is bound at residue glutamine 30. Histidine 61 and aspartate 85 together coordinate spermidine. Residues glutamate 105 and 137 to 138 contribute to the S-methyl-5'-thioadenosine site; that span reads DG. The active-site Proton acceptor is the aspartate 155. Residue 155 to 158 coordinates spermidine; sequence DSTD. Proline 162 is an S-methyl-5'-thioadenosine binding site.

It belongs to the spermidine/spermine synthase family. In terms of assembly, homodimer or homotetramer.

It is found in the cytoplasm. The enzyme catalyses S-adenosyl 3-(methylsulfanyl)propylamine + putrescine = S-methyl-5'-thioadenosine + spermidine + H(+). Its pathway is amine and polyamine biosynthesis; spermidine biosynthesis; spermidine from putrescine: step 1/1. In terms of biological role, catalyzes the irreversible transfer of a propylamine group from the amino donor S-adenosylmethioninamine (decarboxy-AdoMet) to putrescine (1,4-diaminobutane) to yield spermidine. This Pseudomonas aeruginosa (strain ATCC 15692 / DSM 22644 / CIP 104116 / JCM 14847 / LMG 12228 / 1C / PRS 101 / PAO1) protein is Polyamine aminopropyltransferase 1.